Reading from the N-terminus, the 244-residue chain is Thiol S-methyltransferase TMT1B (244 aa).

Positions 1 to 23 (MDALVLFLQLLVLLLTLPLHLLA) are cleaved as a signal peptide.

Belongs to the methyltransferase superfamily.

The protein localises to the endoplasmic reticulum membrane. It is found in the lipid droplet. It localises to the microsome. Its subcellular location is the cytoplasm. The protein resides in the cytosol. The catalysed reaction is a thiol + S-adenosyl-L-methionine = a methyl thioether + S-adenosyl-L-homocysteine + H(+). Thiol S-methyltransferase that catalyzes the transfer of a methyl group from S-adenosyl-L-methionine to alkyl and phenolic thiol-containing acceptor substrates. Together with TMT1B accounts for most of S-thiol methylation activity in the endoplasmic reticulum of hepatocytes. Selectively methylates S-centered nucleophiles from metabolites such as hydrogen sulfide and dithiothreitol. This chain is Thiol S-methyltransferase TMT1B, found in Mus musculus (Mouse).